The primary structure comprises 520 residues: Ribonuclease Y (520 aa).

The chain crosses the membrane as a helical span at residues 4-24; the sequence is TMFTIISILLSLICLVVGYFV. The 64-residue stretch at 210–273 folds into the KH domain; it reads TVSVVNLPND…ETARIALDKL (64 aa). Positions 336–429 constitute an HD domain; that stretch reads VLKHSIEVAH…VAAADALSAA (94 aa).

This sequence belongs to the RNase Y family.

The protein localises to the cell membrane. Endoribonuclease that initiates mRNA decay. This chain is Ribonuclease Y, found in Bacillus pumilus (strain SAFR-032).